Here is a 502-residue protein sequence, read N- to C-terminus: Facilitated trehalose transporter Tret1 (502 aa).

Residues 1–38 (MGVENTKQTMSSQNIKPAKDSDDVLHTQFKEVKRSPMR) are Cytoplasmic-facing. Residues 39-59 (YTMQLLAALAVSMASLMIGYS) form a helical membrane-spanning segment. The Extracellular segment spans residues 60-83 (SSYTSPALVSMRDNTTATFEVTMD). N-linked (GlcNAc...) asparagine glycosylation is present at N73. A helical membrane pass occupies residues 84-104 (MAMWIGSIMPLSALIGGIIGG). Topologically, residues 105–120 (PCIEYIGRRNTILSTA) are cytoplasmic. A helical transmembrane segment spans residues 121 to 141 (LPFLAGWLFIALATNVAMILV). Topologically, residues 142 to 144 (GRS) are extracellular. A helical transmembrane segment spans residues 145 to 165 (ICGFCVGVASLSLPVYLGESI). The Cytoplasmic segment spans residues 166 to 172 (QPEVRGS). The helical transmembrane segment at 173–193 (LGLLPTVFGNSGILMCFTAGM) threads the bilayer. Over 194 to 199 (YLAWRN) the chain is Extracellular. The chain crosses the membrane as a helical span at residues 200-220 (LALLGACIPIIFLILMFLIPE). Over 221–282 (TPRWYISKGK…ELFRKNHIKP (62 aa)) the chain is Cytoplasmic. A helical membrane pass occupies residues 283-303 (VFISLGLMFFQQFSGINAVIF). The Extracellular segment spans residues 304–319 (YTVQIFKDSGSTVDEN). N-linked (GlcNAc...) asparagine glycosylation is present at N319. A helical membrane pass occupies residues 320-340 (LSTIIVGLVNFISTFVAAMII). Topologically, residues 341–346 (DRLGRK) are cytoplasmic. A helical membrane pass occupies residues 347-367 (MLLYISSILMCITLFTFGTFF). At 368–376 (YVKELMDVT) the chain is on the extracellular side. Residues 377–397 (AFGWIPLMSLIVYVIGFSFGF) form a helical membrane-spanning segment. Residues 398-410 (GPIPWLMMGEILP) lie on the Cytoplasmic side of the membrane. Residues 411 to 433 (VKIRGTAASVATAFNWSCTFVVT) traverse the membrane as a helical segment. Residues 434–446 (KTYEDLVLHIGPY) are Extracellular-facing. The helical transmembrane segment at 447–467 (GTFWLFGTLVAVAFIFVIICV) threads the bilayer. Residues 468–502 (PETRGRSLEEIERRFAGPVRRTSAIANLKPMPITI) are Cytoplasmic-facing.

Belongs to the major facilitator superfamily. Sugar transporter (TC 2.A.1.1) family. Trehalose transporter subfamily.

It localises to the cell membrane. Moderate-capacity facilitative transporter for trehalose. Does not transport maltose, sucrose or lactose. Mediates the bidirectional transfer of trehalose. Responsible for the transport of trehalose synthesized in the fat body and the incorporation of trehalose into other tissues that require a carbon source, thereby regulating trehalose levels in the hemolymph. In Apis mellifera ligustica (Common honeybee), this protein is Facilitated trehalose transporter Tret1.